The sequence spans 226 residues: 2-C-methyl-D-erythritol 4-phosphate cytidylyltransferase (226 aa).

The protein belongs to the IspD/TarI cytidylyltransferase family. IspD subfamily.

The enzyme catalyses 2-C-methyl-D-erythritol 4-phosphate + CTP + H(+) = 4-CDP-2-C-methyl-D-erythritol + diphosphate. It functions in the pathway isoprenoid biosynthesis; isopentenyl diphosphate biosynthesis via DXP pathway; isopentenyl diphosphate from 1-deoxy-D-xylulose 5-phosphate: step 2/6. Catalyzes the formation of 4-diphosphocytidyl-2-C-methyl-D-erythritol from CTP and 2-C-methyl-D-erythritol 4-phosphate (MEP). The chain is 2-C-methyl-D-erythritol 4-phosphate cytidylyltransferase from Prochlorococcus marinus (strain SARG / CCMP1375 / SS120).